The following is a 121-amino-acid chain: Large ribosomal subunit protein uL18 (121 aa).

The protein belongs to the universal ribosomal protein uL18 family. In terms of assembly, part of the 50S ribosomal subunit; part of the 5S rRNA/L5/L18/L25 subcomplex. Contacts the 5S and 23S rRNAs.

Functionally, this is one of the proteins that bind and probably mediate the attachment of the 5S RNA into the large ribosomal subunit, where it forms part of the central protuberance. This chain is Large ribosomal subunit protein uL18, found in Ehrlichia canis (strain Jake).